The following is a 681-amino-acid chain: MIKLTIDGQEIEVSEGTTVYQACTKAGKEIPHFCYHERLKIAGNCRMCLVEMEKSPKPIASCAMPVGNGMVIHTDTPMVKKAREGVMEFLLVNHPLDCPICDQGGECDLQDQAFRYGKGTNRFHENKRSIKDKYMGPLIKTAMTRCIQCTRCIRFANDIAGIEEMGAIHRGEHMEVTSYLEQTLDSEISGNMIDICPVGALNSKPYAFKARKWELRHTASIGVHDAEGSNIRIDSRGDEVMRVLPRVNEEINEEWLSDKNRFSYDGLKYQRLDQPYIRKNGKLVSASWDEALKAIADKIKSIKPEKITAFAGTLASVEAMFMLKTFLQKIGCNNYNVNQFDYKLDTTQRGNYLFNTTIAGLEKADLCLLIGANPRQIAPVLNSRIGGRVRAGSLKVARIGEGHNQTYKIQDLGSDLKILEELALDEHKFAEELKAAKYPIIIVGDGVYGRNDGHAILSLIHKIVDKYNIMRDDWKGFNILHNHASMVGGFDIGFDTSLGKLEDIELAYLLGADELPFDKLKSAFIVYQGHHGDIGATKADIILPSAAYTEQSGIYVNLEGRPQIAEKAVSPVGKAKEDIAIIKELADCLKLDTLVSNLQEIRTKLAKEYPIFANIGKIIDNKFAKFSSKDKLSKEPITAETINYYMTDVISKNSVTMARCVEAKQEMSSRGLSTGSRKKRE.

The 2Fe-2S ferredoxin-type domain maps to 1 to 78 (MIKLTIDGQE…GMVIHTDTPM (78 aa)). [2Fe-2S] cluster is bound by residues cysteine 34, cysteine 45, cysteine 48, and cysteine 62. The region spanning 78-117 (MVKKAREGVMEFLLVNHPLDCPICDQGGECDLQDQAFRYG) is the 4Fe-4S His(Cys)3-ligated-type domain. 8 residues coordinate [4Fe-4S] cluster: histidine 94, cysteine 98, cysteine 101, cysteine 107, cysteine 146, cysteine 149, cysteine 152, and cysteine 196. In terms of domain architecture, 4Fe-4S Mo/W bis-MGD-type spans 215 to 271 (LRHTASIGVHDAEGSNIRIDSRGDEVMRVLPRVNEEINEEWLSDKNRFSYDGLKYQR).

Belongs to the complex I 75 kDa subunit family. The cofactor is [2Fe-2S] cluster. [4Fe-4S] cluster is required as a cofactor.

The catalysed reaction is a quinone + NADH + 5 H(+)(in) = a quinol + NAD(+) + 4 H(+)(out). Functionally, NDH-1 shuttles electrons from NADH, via FMN and iron-sulfur (Fe-S) centers, to quinones in the respiratory chain. Couples the redox reaction to proton translocation (for every two electrons transferred, four hydrogen ions are translocated across the cytoplasmic membrane), and thus conserves the redox energy in a proton gradient. The chain is NADH-quinone oxidoreductase subunit G (nuoG) from Rickettsia bellii (strain RML369-C).